Consider the following 374-residue polypeptide: Chaperone protein DnaJ (374 aa).

The J domain occupies 5–70 (DYYDVLGVAK…DKRAAYDRFG (66 aa)). A CR-type zinc finger spans residues 131-209 (GCEEKIRIPT…CHGQGRVQEY (79 aa)). 8 residues coordinate Zn(2+): C144, C147, C161, C164, C183, C186, C197, and C200. 4 CXXCXGXG motif repeats span residues 144–151 (CKTCDGSG), 161–168 (CGTCGGAG), 183–190 (CPECHGAG), and 197–204 (CRDCHGQG).

This sequence belongs to the DnaJ family. In terms of assembly, homodimer. Requires Zn(2+) as cofactor.

Its subcellular location is the cytoplasm. Functionally, participates actively in the response to hyperosmotic and heat shock by preventing the aggregation of stress-denatured proteins and by disaggregating proteins, also in an autonomous, DnaK-independent fashion. Unfolded proteins bind initially to DnaJ; upon interaction with the DnaJ-bound protein, DnaK hydrolyzes its bound ATP, resulting in the formation of a stable complex. GrpE releases ADP from DnaK; ATP binding to DnaK triggers the release of the substrate protein, thus completing the reaction cycle. Several rounds of ATP-dependent interactions between DnaJ, DnaK and GrpE are required for fully efficient folding. Also involved, together with DnaK and GrpE, in the DNA replication of plasmids through activation of initiation proteins. The sequence is that of Chaperone protein DnaJ from Marinomonas sp. (strain MWYL1).